Reading from the N-terminus, the 199-residue chain is BREX protein BrxA (199 aa).

This sequence belongs to the BrxA family.

Its function is as follows. BREX systems (bacteriophage exclusion) provide immunity against bacteriophage. Part of a type 1 BREX system which protects against dsDNA phage. This system allows phage adsorption but prevents phage DNA replication, without degradation of the phage DNA. Methylation of bacterial DNA by PglX guides self/non-self discrimination. This chain is BREX protein BrxA, found in Paramagnetospirillum magneticum (strain ATCC 700264 / AMB-1) (Magnetospirillum magneticum).